The chain runs to 613 residues: Probable LRR receptor-like serine/threonine-protein kinase At5g10290 (613 aa).

An N-terminal signal peptide occupies residues M1–G31. Residues D32 to G225 are Extracellular-facing. N-linked (GlcNAc...) asparagine glycosylation is found at N81 and N116. LRR repeat units lie at residues N95–L117, S119–L141, K143–P166, and N167–I189. N-linked (GlcNAc...) asparagine glycosylation occurs at N155. The N-linked (GlcNAc...) asparagine glycan is linked to N193. Residues I226 to F246 form a helical membrane-spanning segment. The Cytoplasmic segment spans residues C247–R613. T287 carries the phosphothreonine modification. The 280-residue stretch at F290–L569 folds into the Protein kinase domain. L296–V304 provides a ligand contact to ATP. A Phosphothreonine modification is found at T313. ATP is bound at residue K318. At S371 the chain carries Phosphoserine. T390 carries the post-translational modification Phosphothreonine. D417 serves as the catalytic Proton acceptor. 3 positions are modified to phosphothreonine: T450, T451, and T456. At Y464 the chain carries Phosphotyrosine. At S466 the chain carries Phosphoserine. T467 bears the Phosphothreonine mark. S471 is modified (phosphoserine). T547 carries the phosphothreonine modification.

Belongs to the protein kinase superfamily. Ser/Thr protein kinase family.

Its subcellular location is the cell membrane. The enzyme catalyses L-seryl-[protein] + ATP = O-phospho-L-seryl-[protein] + ADP + H(+). It catalyses the reaction L-threonyl-[protein] + ATP = O-phospho-L-threonyl-[protein] + ADP + H(+). This Arabidopsis thaliana (Mouse-ear cress) protein is Probable LRR receptor-like serine/threonine-protein kinase At5g10290.